Consider the following 181-residue polypeptide: MFDATTILAYKGKNRAVIGGDGQVTFGNSVLKGNATKIRTLYNGKILAGFAGSTADAFNLFDMFEEFLEAKKGDILKSVVEFSKAWRKDKVLRRLEAMMIVLNSEHIFILTGNGDVVEPEDGEIASIGSGGNFAISAARALKKHSSLDEEALVRESLSIAADLCIYTNHNIKVLSLDGEKK.

Residue Thr5 is part of the active site. Residues Ala161, Cys164, and Thr167 each contribute to the Na(+) site.

The protein belongs to the peptidase T1B family. HslV subfamily. As to quaternary structure, a double ring-shaped homohexamer of HslV is capped on each side by a ring-shaped HslU homohexamer. The assembly of the HslU/HslV complex is dependent on binding of ATP.

The protein resides in the cytoplasm. The enzyme catalyses ATP-dependent cleavage of peptide bonds with broad specificity.. With respect to regulation, allosterically activated by HslU binding. Its function is as follows. Protease subunit of a proteasome-like degradation complex believed to be a general protein degrading machinery. This is ATP-dependent protease subunit HslV from Sulfurimonas denitrificans (strain ATCC 33889 / DSM 1251) (Thiomicrospira denitrificans (strain ATCC 33889 / DSM 1251)).